Here is a 169-residue protein sequence, read N- to C-terminus: Transcription antitermination protein NusB (169 aa).

It belongs to the NusB family.

Involved in transcription antitermination. Required for transcription of ribosomal RNA (rRNA) genes. Binds specifically to the boxA antiterminator sequence of the ribosomal RNA (rrn) operons. This Rhodococcus opacus (strain B4) protein is Transcription antitermination protein NusB.